The chain runs to 339 residues: Phosphoribosylformylglycinamidine cyclo-ligase (339 aa).

This sequence belongs to the AIR synthase family.

It localises to the cytoplasm. It catalyses the reaction 2-formamido-N(1)-(5-O-phospho-beta-D-ribosyl)acetamidine + ATP = 5-amino-1-(5-phospho-beta-D-ribosyl)imidazole + ADP + phosphate + H(+). It participates in purine metabolism; IMP biosynthesis via de novo pathway; 5-amino-1-(5-phospho-D-ribosyl)imidazole from N(2)-formyl-N(1)-(5-phospho-D-ribosyl)glycinamide: step 2/2. The sequence is that of Phosphoribosylformylglycinamidine cyclo-ligase from Streptococcus thermophilus (strain ATCC BAA-250 / LMG 18311).